Reading from the N-terminus, the 39-residue chain is Mating pheromone Er-11 (39 aa).

3 disulfides stabilise this stretch: Cys3–Cys19, Cys10–Cys34, and Cys15–Cys26.

In terms of assembly, homodimer.

Its subcellular location is the secreted. Its function is as follows. Mating ciliate pheromones (or gamones) are diffusible extracellular communication signals that distinguish different intraspecific classes of cells commonly referred to as 'mating types'. They prepare the latter for conjugation by changing their cell surface properties. This chain is Mating pheromone Er-11 (MAT11), found in Euplotes raikovi.